The sequence spans 754 residues: 5-methyltetrahydropteroyltriglutamate--homocysteine methyltransferase (754 aa).

Residues 17–20 and Lys117 contribute to the 5-methyltetrahydropteroyltri-L-glutamate site; that span reads RELK. L-homocysteine is bound by residues 431–433 and Glu484; that span reads IGS. L-methionine-binding positions include 431-433 and Glu484; that span reads IGS. 5-methyltetrahydropteroyltri-L-glutamate contacts are provided by residues 515-516 and Trp561; that span reads RC. Asp599 lines the L-homocysteine pocket. Asp599 contributes to the L-methionine binding site. A 5-methyltetrahydropteroyltri-L-glutamate-binding site is contributed by Glu605. Positions 641, 643, and 665 each coordinate Zn(2+). His694 serves as the catalytic Proton donor. A Zn(2+)-binding site is contributed by Cys726.

The protein belongs to the vitamin-B12 independent methionine synthase family. It depends on Zn(2+) as a cofactor.

The enzyme catalyses 5-methyltetrahydropteroyltri-L-glutamate + L-homocysteine = tetrahydropteroyltri-L-glutamate + L-methionine. Its pathway is amino-acid biosynthesis; L-methionine biosynthesis via de novo pathway; L-methionine from L-homocysteine (MetE route): step 1/1. Catalyzes the transfer of a methyl group from 5-methyltetrahydrofolate to homocysteine resulting in methionine formation. This is 5-methyltetrahydropteroyltriglutamate--homocysteine methyltransferase from Salmonella paratyphi B (strain ATCC BAA-1250 / SPB7).